Consider the following 589-residue polypeptide: Multidrug transporter FLR2 (589 aa).

A disordered region spans residues 50–116 (KEEMKQDNQT…SSTKDASKPE (67 aa)). A compositionally biased stretch (low complexity) spans 56 to 73 (DNQTSTDSMSTSTQQETD). Asparagine 57 is a glycosylation site (N-linked (GlcNAc...) asparagine). A compositionally biased stretch (basic and acidic residues) spans 107–116 (SSTKDASKPE). The N-linked (GlcNAc...) asparagine glycan is linked to asparagine 136. A run of 12 helical transmembrane segments spans residues 143-163 (TFVIVQLMVLTCINYMGSSIY), 179-199 (VVGTLNLSMYVLGYAIGPIIF), 211-231 (MPLYLWTFILFTILQVACALV), 234-254 (IAGLVILRFITGILCSPVLAT), 275-295 (WAVGAVAAPVMAPILGAAMVV), 301-321 (WIFWLMLFMCGATLLSIIFFF), 378-398 (PIILAFDVYIALCYGAFYLFF), 417-437 (GLAFLGFCVGCVFAYTALIIF), 455-475 (LFLILAMCLGWCLPFSLFFFG), 480-500 (IHWILPIIAELFFVLSVFNLF), 516-536 (ASVFAGNGLCRGAFAAAFPLF), and 551-571 (VAWGSTLIGFITVVLSLIPFV).

This sequence belongs to the major facilitator superfamily.

It is found in the cell membrane. Multidrug transporter that confers resistance to 5-flucytosine (5-FC) and clotrimazole. Further confers azole drug resistance. Plays direct roles in extrusion of 5-flucytosine and clotrimazole. This Candida glabrata (strain ATCC 2001 / BCRC 20586 / JCM 3761 / NBRC 0622 / NRRL Y-65 / CBS 138) (Yeast) protein is Multidrug transporter FLR2.